Here is a 235-residue protein sequence, read N- to C-terminus: Ribosomal RNA small subunit methyltransferase G (235 aa).

S-adenosyl-L-methionine contacts are provided by residues Gly74, Phe79, 97–99 (EAT), 125–126 (AE), and Arg144.

Belongs to the methyltransferase superfamily. RNA methyltransferase RsmG family.

It is found in the cytoplasm. Functionally, specifically methylates the N7 position of a guanine in 16S rRNA. In Dehalococcoides mccartyi (strain CBDB1), this protein is Ribosomal RNA small subunit methyltransferase G.